The chain runs to 169 residues: S-ribosylhomocysteine lyase (169 aa).

Fe cation-binding residues include H54, H58, and C128.

The protein belongs to the LuxS family. Homodimer. Fe cation is required as a cofactor.

The enzyme catalyses S-(5-deoxy-D-ribos-5-yl)-L-homocysteine = (S)-4,5-dihydroxypentane-2,3-dione + L-homocysteine. Involved in the synthesis of autoinducer 2 (AI-2) which is secreted by bacteria and is used to communicate both the cell density and the metabolic potential of the environment. The regulation of gene expression in response to changes in cell density is called quorum sensing. Catalyzes the transformation of S-ribosylhomocysteine (RHC) to homocysteine (HC) and 4,5-dihydroxy-2,3-pentadione (DPD). In Shewanella sp. (strain MR-4), this protein is S-ribosylhomocysteine lyase.